Consider the following 208-residue polypeptide: dITP/XTP pyrophosphatase (208 aa).

11 to 16 contacts substrate; that stretch reads SRNWKK. Asp-76 functions as the Proton acceptor in the catalytic mechanism. Position 76 (Asp-76) interacts with Mg(2+). Residues Ser-77, 158 to 161, Lys-184, and 189 to 190 each bind substrate; these read FGYD and HR.

It belongs to the HAM1 NTPase family. In terms of assembly, homodimer. The cofactor is Mg(2+).

It carries out the reaction XTP + H2O = XMP + diphosphate + H(+). The enzyme catalyses dITP + H2O = dIMP + diphosphate + H(+). The catalysed reaction is ITP + H2O = IMP + diphosphate + H(+). In terms of biological role, pyrophosphatase that catalyzes the hydrolysis of nucleoside triphosphates to their monophosphate derivatives, with a high preference for the non-canonical purine nucleotides XTP (xanthosine triphosphate), dITP (deoxyinosine triphosphate) and ITP. Seems to function as a house-cleaning enzyme that removes non-canonical purine nucleotides from the nucleotide pool, thus preventing their incorporation into DNA/RNA and avoiding chromosomal lesions. The polypeptide is dITP/XTP pyrophosphatase (Mycobacterium leprae (strain TN)).